A 365-amino-acid polypeptide reads, in one-letter code: Chorismate synthase (365 aa).

NADP(+) is bound by residues Arg-48 and Arg-54. Residues 125 to 127, 237 to 238, Gly-277, 292 to 296, and Arg-318 each bind FMN; these read RSS, NA, and KPTSS.

It belongs to the chorismate synthase family. Homotetramer. FMNH2 serves as cofactor.

It carries out the reaction 5-O-(1-carboxyvinyl)-3-phosphoshikimate = chorismate + phosphate. The protein operates within metabolic intermediate biosynthesis; chorismate biosynthesis; chorismate from D-erythrose 4-phosphate and phosphoenolpyruvate: step 7/7. In terms of biological role, catalyzes the anti-1,4-elimination of the C-3 phosphate and the C-6 proR hydrogen from 5-enolpyruvylshikimate-3-phosphate (EPSP) to yield chorismate, which is the branch point compound that serves as the starting substrate for the three terminal pathways of aromatic amino acid biosynthesis. This reaction introduces a second double bond into the aromatic ring system. The sequence is that of Chorismate synthase from Verminephrobacter eiseniae (strain EF01-2).